A 369-amino-acid chain; its full sequence is Histidinol-phosphate aminotransferase (369 aa).

The residue at position 222 (Lys222) is an N6-(pyridoxal phosphate)lysine.

This sequence belongs to the class-II pyridoxal-phosphate-dependent aminotransferase family. Histidinol-phosphate aminotransferase subfamily. As to quaternary structure, homodimer. Requires pyridoxal 5'-phosphate as cofactor.

It carries out the reaction L-histidinol phosphate + 2-oxoglutarate = 3-(imidazol-4-yl)-2-oxopropyl phosphate + L-glutamate. It participates in amino-acid biosynthesis; L-histidine biosynthesis; L-histidine from 5-phospho-alpha-D-ribose 1-diphosphate: step 7/9. The chain is Histidinol-phosphate aminotransferase from Halalkalibacterium halodurans (strain ATCC BAA-125 / DSM 18197 / FERM 7344 / JCM 9153 / C-125) (Bacillus halodurans).